The primary structure comprises 63 residues: Large ribosomal subunit protein bL32 (63 aa).

Residues 1-22 (MANPKAKMSKSRRDKRRAQFNA) are disordered. The span at 7-18 (KMSKSRRDKRRA) shows a compositional bias: basic residues.

This sequence belongs to the bacterial ribosomal protein bL32 family.

In Chlorobium limicola (strain DSM 245 / NBRC 103803 / 6330), this protein is Large ribosomal subunit protein bL32.